The sequence spans 581 residues: Proline--tRNA ligase (581 aa).

It belongs to the class-II aminoacyl-tRNA synthetase family. ProS type 1 subfamily. Homodimer.

It is found in the cytoplasm. It carries out the reaction tRNA(Pro) + L-proline + ATP = L-prolyl-tRNA(Pro) + AMP + diphosphate. Functionally, catalyzes the attachment of proline to tRNA(Pro) in a two-step reaction: proline is first activated by ATP to form Pro-AMP and then transferred to the acceptor end of tRNA(Pro). As ProRS can inadvertently accommodate and process non-cognate amino acids such as alanine and cysteine, to avoid such errors it has two additional distinct editing activities against alanine. One activity is designated as 'pretransfer' editing and involves the tRNA(Pro)-independent hydrolysis of activated Ala-AMP. The other activity is designated 'posttransfer' editing and involves deacylation of mischarged Ala-tRNA(Pro). The misacylated Cys-tRNA(Pro) is not edited by ProRS. The protein is Proline--tRNA ligase of Variovorax paradoxus (strain S110).